A 206-amino-acid polypeptide reads, in one-letter code: Flavin prenyltransferase UbiX (206 aa).

Residues 14–16 (GAS), Thr40, 101–104 (SMGT), and Arg136 each bind FMN. Dimethylallyl phosphate contacts are provided by Tyr166 and Lys182.

It belongs to the UbiX/PAD1 family.

The enzyme catalyses dimethylallyl phosphate + FMNH2 = prenylated FMNH2 + phosphate. Flavin prenyltransferase that catalyzes the synthesis of the prenylated FMN cofactor (prenyl-FMN) for 4-hydroxy-3-polyprenylbenzoic acid decarboxylase UbiD. The prenyltransferase is metal-independent and links a dimethylallyl moiety from dimethylallyl monophosphate (DMAP) to the flavin N5 and C6 atoms of FMN. The polypeptide is Flavin prenyltransferase UbiX (Halalkalibacterium halodurans (strain ATCC BAA-125 / DSM 18197 / FERM 7344 / JCM 9153 / C-125) (Bacillus halodurans)).